A 141-amino-acid chain; its full sequence is Hemoglobin subunit alpha (141 aa).

One can recognise a Globin domain in the interval 1–141; that stretch reads VLSPADKTNL…VSTVLTSKYR (141 aa). Serine 3 carries the phosphoserine modification. Position 7 is an N6-succinyllysine (lysine 7). Threonine 8 carries the phosphothreonine modification. Lysine 11 bears the N6-succinyllysine mark. Residue lysine 16 is modified to N6-acetyllysine; alternate. Lysine 16 carries the N6-succinyllysine; alternate modification. Tyrosine 24 carries the post-translational modification Phosphotyrosine. Lysine 40 carries the post-translational modification N6-succinyllysine. The residue at position 49 (serine 49) is a Phosphoserine. Histidine 58 lines the O2 pocket. Residue histidine 87 coordinates heme b. Residue serine 102 is modified to Phosphoserine. Threonine 108 is subject to Phosphothreonine. Serine 124 is modified (phosphoserine). A phosphothreonine mark is found at threonine 134 and threonine 137. Residue serine 138 is modified to Phosphoserine.

The protein belongs to the globin family. Heterotetramer of two alpha chains and two beta chains. In terms of tissue distribution, red blood cells.

Functionally, involved in oxygen transport from the lung to the various peripheral tissues. The polypeptide is Hemoglobin subunit alpha (Tamias striatus (Eastern chipmunk)).